A 1016-amino-acid polypeptide reads, in one-letter code: Protein TIC110, chloroplastic (1016 aa).

Residues 1 to 51 constitute a chloroplast transit peptide; the sequence is MNPSLVTAINAPISPSPRSPLLSHFLPTLPHRFSKSECLSRRRYRVSFPRS. Ser52 carries the post-translational modification N-acetylserine. The Stromal portion of the chain corresponds to 52–95; the sequence is SAASSDQLSVSTQAKNPGIHGNKKELTGLQPIVEKMTPPVRLAT. A helical transmembrane segment spans residues 96–116; that stretch reads SAVVLAASLATGYGLGLRLAG. The Chloroplast intermembrane segment spans residues 117–118; sequence SR. The helical transmembrane segment at 119–139 threads the bilayer; that stretch reads NIAFGGAAVAGAAGGAVVYAL. The Stromal segment spans residues 140-259; it reads NSAVPEVAAI…EREGDAEQRR (120 aa). A helical membrane pass occupies residues 260–280; that stretch reads AFMRLVYVSALVFGDASSFLL. Residues 281-368 are Chloroplast intermembrane-facing; that stretch reads PWKRVLKVTD…SILKSRTRAA (88 aa). Residues 369–386 form a helical membrane-spanning segment; that stretch reads KSLASVVEELEKVLEFNN. The Stromal segment spans residues 387-632; that stretch reads LLVSLKSHSE…RAAENRTDSA (246 aa). The chain crosses the membrane as a helical span at residues 633–650; sequence KELKKMIAFNTLVVTEMV. The Chloroplast intermembrane portion of the chain corresponds to 651–719; the sequence is ADIKGESSDK…DDLPDRDRID (69 aa). Over residues 654–669 the composition is skewed to basic and acidic residues; it reads KGESSDKAPEEDPVQE. The interval 654–708 is disordered; that stretch reads KGESSDKAPEEDPVQEKEEDDEDEEWGSLESLRKTRPDKELAEKMGKPGQTEITL. Residues 670 to 680 show a composition bias toward acidic residues; that stretch reads KEEDDEDEEWG. Residues 684-699 show a composition bias toward basic and acidic residues; that stretch reads SLRKTRPDKELAEKMG. A helical transmembrane segment spans residues 720 to 736; it reads LYKTYLLYCVTGEVTRI. At 737-1016 the chain is on the stromal side; the sequence is PFGAQITTKR…SAAEEGNFVF (280 aa).

This sequence belongs to the chloroplast envelope anion channel-forming Tic110 (TC 1.A.18) family. In terms of assembly, part of the Tic complex. Interacts with HSP70, HSP93 and TIC40. Interacts with the Toc complex components TOC33, TOC75 and TOC159. Interacts with LTD. In terms of tissue distribution, expressed in seedlings, flowers, leaves, stems and roots.

The protein resides in the plastid. The protein localises to the chloroplast inner membrane. In terms of biological role, involved in protein precursor import into chloroplasts. Forms a voltage-dependent cation-selective channel at the inner envelope of chloroplasts, which specifically responds to a transit peptide. Associates with both the precursor and mature forms of the preprotein. This chain is Protein TIC110, chloroplastic (TIC110), found in Arabidopsis thaliana (Mouse-ear cress).